Consider the following 133-residue polypeptide: Salivary cystatin-L (133 aa).

The signal sequence occupies residues 1–19 (MTSSFALVLLLGGVAVCVA). The region spanning 30-117 (ANHQANPEFL…HRTCTTVVFE (88 aa)) is the Cystatin domain. 2 disulfides stabilise this stretch: cysteine 89–cysteine 100 and cysteine 111–cysteine 130.

It belongs to the cystatin family. Monomer. Can form homodimers in vitro, but probably not in vivo. Homodimers are predicted to be inactive; dimerization disrupts the interaction with target proteases.

The protein localises to the secreted. Inhibitor of cysteine proteinases. Inhibits host immune responses via its inhibition of host cathepsins. Contributes to the suppression of the host's immune response to tick salivary proteins and is important for successful feeding on hosts. Inhibits differentiation of host dendritic cells. Inhibits proliferation of host T-cells in response to antigen stimulus. Down-regulates TLR2-mediated host responses to infection by B.burgdorferi and the production of the chemokine CCL3 by host dendritic cells. Down-regulates host responses to infection by B.burgdorferi and the production of IFNB1 by host dendritic cells. Down-regulates IL1B production by host mast cells, and this then leads to impaired activation of IL1R1, resulting in decreased IL9 production. Inhibits host inflammatory reactions and recruitment of host neutrophils. Inhibits papain and cathepsin L (CTSL) (in vitro). Inhibits cathepsin S (CTSS) (in vitro). Inhibits CTSV and CTSC, but to a lesser degree (in vitro). This Ixodes scapularis (Black-legged tick) protein is Salivary cystatin-L.